We begin with the raw amino-acid sequence, 342 residues long: Oxygen-dependent coproporphyrinogen-III oxidase (342 aa).

Ser-98 lines the substrate pocket. Residues His-102 and His-112 each coordinate a divalent metal cation. The active-site Proton donor is the His-112. 114–116 (NYR) is a substrate binding site. Residues His-146 and His-176 each contribute to the a divalent metal cation site. Residues 266 to 301 (YVEFNLVWDRGTIFGLQTNGRTESILMSLPPLARWE) are important for dimerization.

This sequence belongs to the aerobic coproporphyrinogen-III oxidase family. As to quaternary structure, homodimer. A divalent metal cation is required as a cofactor.

It is found in the cytoplasm. It carries out the reaction coproporphyrinogen III + O2 + 2 H(+) = protoporphyrinogen IX + 2 CO2 + 2 H2O. Its pathway is porphyrin-containing compound metabolism; protoporphyrin-IX biosynthesis; protoporphyrinogen-IX from coproporphyrinogen-III (O2 route): step 1/1. Its function is as follows. Involved in the heme and chlorophyll biosynthesis. Catalyzes the aerobic oxidative decarboxylation of propionate groups of rings A and B of coproporphyrinogen-III to yield the vinyl groups in protoporphyrinogen-IX. The sequence is that of Oxygen-dependent coproporphyrinogen-III oxidase from Prochlorococcus marinus (strain MIT 9515).